The primary structure comprises 555 residues: Solute carrier family 2, facilitated glucose transporter member 10 (555 aa).

Over 1-15 the chain is Cytoplasmic; sequence MGLSSPTLILAATVS. A helical membrane pass occupies residues 16–36; the sequence is LLGGIVFGYELGIISGALLVL. Topologically, residues 37 to 48 are extracellular; it reads KTVYQLTCFEQE. The helical transmembrane segment at 49–69 threads the bilayer; the sequence is ALVSAVLFGALLASLIGGIII. The Cytoplasmic portion of the chain corresponds to 70-82; that stretch reads DRWGRRTAILASN. The chain crosses the membrane as a helical span at residues 83 to 103; the sequence is LVVLAGSIILIATSTFWWLIV. The Extracellular portion of the chain corresponds to 104–105; the sequence is GR. The chain crosses the membrane as a helical span at residues 106-126; it reads VTIGFAISISSMACCIYVSEI. The Cytoplasmic segment spans residues 127-132; it reads VRPHQR. A helical transmembrane segment spans residues 133–153; that stretch reads GMLVSLYETGITVGILISYAM. Over 154–165 the chain is Extracellular; that stretch reads NYFLSGVNESWK. N161 carries N-linked (GlcNAc...) asparagine glycosylation. Residues 166–186 traverse the membrane as a helical segment; the sequence is YMFGLAIVPAAFQFISILFLP. The Cytoplasmic portion of the chain corresponds to 187–240; that stretch reads SKPHKLNFWEQDTDDGFIELEETGEAGEFKPDTYDRQYTFLDLFRSKDNMRTRT. A helical membrane pass occupies residues 241 to 261; sequence LLGLGLVLFQQFTGQPNVLYY. A D-glucose-binding site is contributed by 250 to 251; sequence QQ. Residues 262 to 277 are Extracellular-facing; it reads ASTIFQSVGFQSNSSA. A glycan (N-linked (GlcNAc...) asparagine) is linked at N274. The helical transmembrane segment at 278–298 threads the bilayer; it reads VLASVGLGVVKVASTLIAICF. At 299–305 the chain is on the cytoplasmic side; that stretch reads ADKAGRR. A helical transmembrane segment spans residues 306–326; the sequence is ILLLAGCIVMTIAITGIGIVS. Residues 327–415 lie on the Extracellular side of the membrane; it reads FTVKMDSHRD…ASPELPSNYT (89 aa). N-linked (GlcNAc...) asparagine glycosylation is found at N344, N351, N400, and N413. A helical transmembrane segment spans residues 416-436; sequence ILNWITLLSMMAFVSAFSIGF. The Cytoplasmic portion of the chain corresponds to 437–464; sequence GPMTWIVLSEIYPADIRGRAFAFCNSFN. W441 contacts D-glucose. Residues 465–483 form a helical membrane-spanning segment; the sequence is WAANLLITLTFLDVIASIG. Residues 484 to 485 are Extracellular-facing; the sequence is LS. A helical transmembrane segment spans residues 486–506; it reads WTFLLYGVVGLLAIAFIYFFI. Topologically, residues 507-555 are cytoplasmic; the sequence is PETKGQSLEEIDKQFSTKRILQKRETSKGVGKRPSSGPPYQRIGKASPS. A disordered region spans residues 528–555; sequence QKRETSKGVGKRPSSGPPYQRIGKASPS.

This sequence belongs to the major facilitator superfamily. Sugar transporter (TC 2.A.1.1) family. Glucose transporter subfamily.

The protein localises to the endomembrane system. The protein resides in the cytoplasm. It localises to the perinuclear region. The enzyme catalyses D-glucose(out) = D-glucose(in). Functionally, facilitative glucose transporter required for the development of the cardiovascular system. This is Solute carrier family 2, facilitated glucose transporter member 10 from Xenopus tropicalis (Western clawed frog).